The chain runs to 770 residues: Transcription activator AMTR1 (770 aa).

A DNA-binding region (zn(2)-C6 fungal-type) is located at residues 7 to 34; it reads CLTCRQRKLKCDEKKPVCRQCAKASREC.

The protein resides in the nucleus. Functionally, transcription factor that regulates the expression of the gene clusters that mediate the biosynthesis of AM-toxins, host-selective toxins (HSTs) causing Alternaria blotch on apple, a worldwide distributed disease. AM-toxins have two target sites for affecting susceptible apple cells; they cause invagination of the plasma membrane and electrolyte loss and chloroplast disorganization. The sequence is that of Transcription activator AMTR1 from Alternaria alternata (Alternaria rot fungus).